Consider the following 134-residue polypeptide: Auxin-responsive protein SAUR40 (134 aa).

It belongs to the ARG7 family. Interacts with and inhibits PP2C-D subfamily of type 2C phosphatases such as PP2C67/PP2C-D1.

It localises to the cytoplasm. In terms of biological role, provide a mechanistic link between auxin and plasma membrane H(+)-ATPases (PM H(+)-ATPases, e.g. AHA1 and AHA2), and triggers PM H(+)-ATPases activity by promoting phosphorylation of their C-terminal autoinhibitory domain as a result of PP2C-D subfamily of type 2C phosphatases inhibition, thus leading to the acidification of the apoplast and the facilitation of solutes and water uptake to drive cell expansion. Plays a role in the regulation of cell expansion, root meristem patterning and auxin transport. The sequence is that of Auxin-responsive protein SAUR40 from Arabidopsis thaliana (Mouse-ear cress).